The chain runs to 116 residues: Cell cycle protein GpsB (116 aa).

The stretch at 32–69 (LDDVIKDYETYSALVKELREENSRLKQELSKRMQEAPN) forms a coiled coil. Positions 57–78 (KQELSKRMQEAPNSTASQVHQS) are disordered. The segment covering 67-78 (APNSTASQVHQS) has biased composition (polar residues).

This sequence belongs to the GpsB family. Forms polymers through the coiled coil domains. Interacts with PBP1, MreC and EzrA.

It is found in the cytoplasm. Functionally, divisome component that associates with the complex late in its assembly, after the Z-ring is formed, and is dependent on DivIC and PBP2B for its recruitment to the divisome. Together with EzrA, is a key component of the system that regulates PBP1 localization during cell cycle progression. Its main role could be the removal of PBP1 from the cell pole after pole maturation is completed. Also contributes to the recruitment of PBP1 to the division complex. Not essential for septum formation. The sequence is that of Cell cycle protein GpsB from Streptococcus gordonii (strain Challis / ATCC 35105 / BCRC 15272 / CH1 / DL1 / V288).